Reading from the N-terminus, the 147-residue chain is uncharacterized protein (147 aa).

One can recognise a CMP/dCMP-type deaminase domain in the interval 4-120 (KWAKRFFQMA…EQTEDFLSRW (117 aa)). Histidine 67 lines the Zn(2+) pocket. The active-site Proton donor is glutamate 69. Zn(2+)-binding residues include cysteine 92 and cysteine 95.

This sequence belongs to the cytidine and deoxycytidylate deaminase family. Zn(2+) is required as a cofactor.

This is an uncharacterized protein from Aliivibrio fischeri (Vibrio fischeri).